The chain runs to 544 residues: Chaperonin GroEL (544 aa).

ATP contacts are provided by residues 30–33 (TLGP), Lys51, 87–91 (DGTTT), Gly415, and Asp496.

The protein belongs to the chaperonin (HSP60) family. In terms of assembly, forms a cylinder of 14 subunits composed of two heptameric rings stacked back-to-back. Interacts with the co-chaperonin GroES.

The protein resides in the cytoplasm. The enzyme catalyses ATP + H2O + a folded polypeptide = ADP + phosphate + an unfolded polypeptide.. Together with its co-chaperonin GroES, plays an essential role in assisting protein folding. The GroEL-GroES system forms a nano-cage that allows encapsulation of the non-native substrate proteins and provides a physical environment optimized to promote and accelerate protein folding. This is Chaperonin GroEL from Granulibacter bethesdensis (strain ATCC BAA-1260 / CGDNIH1).